Consider the following 140-residue polypeptide: ATP synthase epsilon chain (140 aa).

This sequence belongs to the ATPase epsilon chain family. In terms of assembly, F-type ATPases have 2 components, CF(1) - the catalytic core - and CF(0) - the membrane proton channel. CF(1) has five subunits: alpha(3), beta(3), gamma(1), delta(1), epsilon(1). CF(0) has three main subunits: a, b and c.

The protein resides in the cell inner membrane. Functionally, produces ATP from ADP in the presence of a proton gradient across the membrane. The protein is ATP synthase epsilon chain (atpC) of Vibrio alginolyticus.